The chain runs to 178 residues: Caveolin-1 (178 aa).

The residue at position 2 (Ser2) is an N-acetylserine. Ser2 bears the Phosphoserine mark. A required for homooligomerization region spans residues Ser2 to Val94. The Cytoplasmic portion of the chain corresponds to Ser2–Ser104. The residue at position 5 (Lys5) is an N6-acetyllysine; alternate. A Glycyl lysine isopeptide (Lys-Gly) (interchain with G-Cter in ubiquitin); alternate cross-link involves residue Lys5. Tyr6 carries the phosphotyrosine modification. Ser9 carries the phosphoserine modification. A Phosphotyrosine; by ABL1 modification is found at Tyr14. The residue at position 25 (Tyr25) is a Phosphotyrosine. Glycyl lysine isopeptide (Lys-Gly) (interchain with G-Cter in ubiquitin) cross-links involve residues Lys26 and Lys30. Residue Ser37 is modified to Phosphoserine. Glycyl lysine isopeptide (Lys-Gly) (interchain with G-Cter in ubiquitin) cross-links involve residues Lys39, Lys47, and Lys57. An interaction with CAVIN3 region spans residues Asp82–Val94. The helical intramembrane region spans Ala105 to Leu125. Topologically, residues His126 to Ile178 are cytoplasmic. The interval Val131–Gln142 is interacts with SPRY1, SPRY2, SPRY3 and SPRY4. Residues Cys133, Cys143, and Cys156 are each lipidated (S-palmitoyl cysteine). The interval Ser149 to Phe160 is interacts with SPRY1, SPRY2, and SPRY4. Residues Phe167–Ile178 are interacts with SPRY1, SPRY2, SPRY3 and SPRY4.

This sequence belongs to the caveolin family. Homooligomer. Interacts with GLIPR2. Interacts with NOSTRIN. Interacts with SNAP25 and STX1A. Interacts (via the N-terminus) with DPP4; the interaction is direct. Interacts with CTNNB1, CDH1 and JUP. Interacts with PACSIN2; this interaction induces membrane tubulation. Interacts with SLC7A9. Interacts with BMX and BTK. Interacts with TGFBR1. Interacts with CAVIN3 (via leucine-zipper domain) in a cholesterol-sensitive manner. Interacts with CAVIN1. Interacts with EHD2 in a cholesterol-dependent manner. Forms a ternary complex with UBXN6 and VCP; mediates CAV1 targeting to lysosomes for degradation. Interacts with ABCG1; this interaction regulates ABCG1-mediated cholesterol efflux. Interacts with NEU3; this interaction enhances NEU3 sialidase activity within caveola. Interacts (via C-terminus) with SPRY1, SPRY2 (via C-terminus), SPRY3, and SPRY4. Interacts with IGFBP5; this interaction allows trafficking of IGFBP5 from the plasma membrane to the nucleus. In terms of processing, phosphorylated at Tyr-14 by ABL1 in response to oxidative stress. Ubiquitinated. Undergo monoubiquitination and multi- and/or polyubiquitination. Monoubiquitination of N-terminal lysines promotes integration in a ternary complex with UBXN6 and VCP which promotes oligomeric CAV1 targeting to lysosomes for degradation. Ubiquitinated by ZNRF1; leading to degradation and modulation of the TLR4-mediated immune response.

Its subcellular location is the golgi apparatus membrane. The protein localises to the cell membrane. The protein resides in the membrane. It localises to the caveola. It is found in the membrane raft. In terms of biological role, may act as a scaffolding protein within caveolar membranes. Forms a stable heterooligomeric complex with CAV2 that targets to lipid rafts and drives caveolae formation. Mediates the recruitment of CAVIN proteins (CAVIN1/2/3/4) to the caveolae. Interacts directly with G-protein alpha subunits and can functionally regulate their activity. Involved in the costimulatory signal essential for T-cell receptor (TCR)-mediated T-cell activation. Its binding to DPP4 induces T-cell proliferation and NF-kappa-B activation in a T-cell receptor/CD3-dependent manner. Recruits CTNNB1 to caveolar membranes and may regulate CTNNB1-mediated signaling through the Wnt pathway. Negatively regulates TGFB1-mediated activation of SMAD2/3 by mediating the internalization of TGFBR1 from membrane rafts leading to its subsequent degradation. Binds 20(S)-hydroxycholesterol (20(S)-OHC). This chain is Caveolin-1 (CAV1), found in Papio anubis (Olive baboon).